The following is a 420-amino-acid chain: Ribosome biogenesis protein WDR12 homolog (420 aa).

The interval 10–92 is ubiquitin-like (UBL) domain; it reads VQVHLKTKQE…EDAIEIEYVE (83 aa). 7 WD repeats span residues 104-142, 143-185, 192-231, 250-288, 290-329, 335-375, and 379-417; these read LHDD…LTIS, GHTA…NSVE, GHER…AVEG, GHRE…IKTE, STNK…GSVV, GHNA…APLY, and GHGE…ADDA.

The protein belongs to the WD repeat WDR12/YTM1 family.

It is found in the nucleus. The protein localises to the nucleolus. The protein resides in the nucleoplasm. Functionally, required for maturation of ribosomal RNAs and formation of the large ribosomal subunit. This chain is Ribosome biogenesis protein WDR12 homolog, found in Drosophila yakuba (Fruit fly).